The following is a 178-amino-acid chain: Small ribosomal subunit protein bS16 (178 aa).

The interval 78–178 is disordered; that stretch reads KLGITQWTAG…AAPAEGEEQA (101 aa). The span at 91 to 113 shows a compositional bias: basic and acidic residues; that stretch reads KKGEPGQKAKERAEERAQREADR. Residues 114–127 are compositionally biased toward low complexity; sequence AAAAAEAAAAPAEE. Acidic residues predominate over residues 128 to 139; it reads APAEEAPAEEAA. Positions 140 to 172 are enriched in low complexity; that stretch reads AEAAPEAAAAEEAPAAEAAAEEAAPAAEEAAPA.

It belongs to the bacterial ribosomal protein bS16 family.

The protein is Small ribosomal subunit protein bS16 of Phenylobacterium zucineum (strain HLK1).